The chain runs to 510 residues: Lysine--tRNA ligase (510 aa).

Mg(2+) contacts are provided by glutamate 420 and glutamate 427.

Belongs to the class-II aminoacyl-tRNA synthetase family. Homodimer. Requires Mg(2+) as cofactor.

It is found in the cytoplasm. The enzyme catalyses tRNA(Lys) + L-lysine + ATP = L-lysyl-tRNA(Lys) + AMP + diphosphate. This chain is Lysine--tRNA ligase, found in Ralstonia nicotianae (strain ATCC BAA-1114 / GMI1000) (Ralstonia solanacearum).